Consider the following 373-residue polypeptide: Chaperone protein DnaJ (373 aa).

The J domain maps to 5 to 70; that stretch reads DYYEVLGVAK…QKRAAYDRYG (66 aa). The segment at 133–211 adopts a CR-type zinc-finger fold; sequence GFDTEIRVPS…CDGVGRTRRN (79 aa). Zn(2+) is bound by residues Cys146, Cys149, Cys163, Cys166, Cys185, Cys188, Cys199, and Cys202. CXXCXGXG motif repeat units lie at residues 146–153, 163–170, 185–192, and 199–206; these read CDTCHGSG, CRTCGGSG, CPTCHGTG, and CPSCDGVG.

Belongs to the DnaJ family. As to quaternary structure, homodimer. Zn(2+) is required as a cofactor.

The protein resides in the cytoplasm. Its function is as follows. Participates actively in the response to hyperosmotic and heat shock by preventing the aggregation of stress-denatured proteins and by disaggregating proteins, also in an autonomous, DnaK-independent fashion. Unfolded proteins bind initially to DnaJ; upon interaction with the DnaJ-bound protein, DnaK hydrolyzes its bound ATP, resulting in the formation of a stable complex. GrpE releases ADP from DnaK; ATP binding to DnaK triggers the release of the substrate protein, thus completing the reaction cycle. Several rounds of ATP-dependent interactions between DnaJ, DnaK and GrpE are required for fully efficient folding. Also involved, together with DnaK and GrpE, in the DNA replication of plasmids through activation of initiation proteins. The sequence is that of Chaperone protein DnaJ from Bordetella bronchiseptica (strain ATCC BAA-588 / NCTC 13252 / RB50) (Alcaligenes bronchisepticus).